The following is a 130-amino-acid chain: MSQPVQRAAARSFLQKYINKETLKYIFTTHFWGPVSNFGIPIAAIYDLKKDPTLISGPMTFALVTYSGVFMKYALSVSPKNYLLFGCHLINETAQLAQGYRFLKYTYFTTDEEKKALDKEWKEKEKTGKQ.

Helical transmembrane passes span 23-45 (LKYI…IAAI) and 55-77 (ISGP…ALSV).

Belongs to the mitochondrial pyruvate carrier (MPC) (TC 2.A.105) family. As to quaternary structure, the functional 150 kDa pyruvate import complex is a heteromer of MPC1 and either MPC2 or MPC3.

It localises to the mitochondrion. Its subcellular location is the mitochondrion inner membrane. Functionally, mediates the uptake of pyruvate into mitochondria. This chain is Mitochondrial pyruvate carrier 1, found in Saccharomyces cerevisiae (strain ATCC 204508 / S288c) (Baker's yeast).